A 418-amino-acid polypeptide reads, in one-letter code: Light-independent protochlorophyllide reductase subunit N (418 aa).

C17, C42, and C103 together coordinate [4Fe-4S] cluster.

This sequence belongs to the BchN/ChlN family. Protochlorophyllide reductase is composed of three subunits; ChlL, ChlN and ChlB. Forms a heterotetramer of two ChlB and two ChlN subunits. It depends on [4Fe-4S] cluster as a cofactor.

It catalyses the reaction chlorophyllide a + oxidized 2[4Fe-4S]-[ferredoxin] + 2 ADP + 2 phosphate = protochlorophyllide a + reduced 2[4Fe-4S]-[ferredoxin] + 2 ATP + 2 H2O. It functions in the pathway porphyrin-containing compound metabolism; chlorophyll biosynthesis (light-independent). Functionally, component of the dark-operative protochlorophyllide reductase (DPOR) that uses Mg-ATP and reduced ferredoxin to reduce ring D of protochlorophyllide (Pchlide) to form chlorophyllide a (Chlide). This reaction is light-independent. The NB-protein (ChlN-ChlB) is the catalytic component of the complex. The polypeptide is Light-independent protochlorophyllide reductase subunit N (Prochlorococcus marinus (strain MIT 9215)).